Reading from the N-terminus, the 528-residue chain is Bifunctional purine biosynthesis protein PurH (528 aa).

The 146-residue stretch at 1–146 (MAPTALLSVS…KNHDHVAVLT (146 aa)) folds into the MGS-like domain.

Belongs to the PurH family.

The enzyme catalyses (6R)-10-formyltetrahydrofolate + 5-amino-1-(5-phospho-beta-D-ribosyl)imidazole-4-carboxamide = 5-formamido-1-(5-phospho-D-ribosyl)imidazole-4-carboxamide + (6S)-5,6,7,8-tetrahydrofolate. It carries out the reaction IMP + H2O = 5-formamido-1-(5-phospho-D-ribosyl)imidazole-4-carboxamide. Its pathway is purine metabolism; IMP biosynthesis via de novo pathway; 5-formamido-1-(5-phospho-D-ribosyl)imidazole-4-carboxamide from 5-amino-1-(5-phospho-D-ribosyl)imidazole-4-carboxamide (10-formyl THF route): step 1/1. It participates in purine metabolism; IMP biosynthesis via de novo pathway; IMP from 5-formamido-1-(5-phospho-D-ribosyl)imidazole-4-carboxamide: step 1/1. This chain is Bifunctional purine biosynthesis protein PurH, found in Synechococcus sp. (strain WH7803).